The following is a 181-amino-acid chain: ATP synthase subunit delta (181 aa).

Belongs to the ATPase delta chain family. As to quaternary structure, F-type ATPases have 2 components, F(1) - the catalytic core - and F(0) - the membrane proton channel. F(1) has five subunits: alpha(3), beta(3), gamma(1), delta(1), epsilon(1). F(0) has three main subunits: a(1), b(2) and c(10-14). The alpha and beta chains form an alternating ring which encloses part of the gamma chain. F(1) is attached to F(0) by a central stalk formed by the gamma and epsilon chains, while a peripheral stalk is formed by the delta and b chains.

It is found in the cell inner membrane. In terms of biological role, f(1)F(0) ATP synthase produces ATP from ADP in the presence of a proton or sodium gradient. F-type ATPases consist of two structural domains, F(1) containing the extramembraneous catalytic core and F(0) containing the membrane proton channel, linked together by a central stalk and a peripheral stalk. During catalysis, ATP synthesis in the catalytic domain of F(1) is coupled via a rotary mechanism of the central stalk subunits to proton translocation. Its function is as follows. This protein is part of the stalk that links CF(0) to CF(1). It either transmits conformational changes from CF(0) to CF(1) or is implicated in proton conduction. The polypeptide is ATP synthase subunit delta (Chlorobium phaeovibrioides (strain DSM 265 / 1930) (Prosthecochloris vibrioformis (strain DSM 265))).